Reading from the N-terminus, the 321-residue chain is Polygalacturonan/rhamnogalacturonan transport system permease protein YteP (321 aa).

One can recognise an ABC transmembrane type-1 domain in the interval 1 to 144 (MKTAEAQAPA…YIPHFMSWVI (144 aa)). A run of 3 helical transmembrane segments spans residues 21–41 (RKRLLIKLIQQKYLYLMILPG), 63–83 (YQPFLGILGSEWVGLKHFIRL), and 123–143 (IALFKKFVQTLIYIPHFMSWV).

It belongs to the binding-protein-dependent transport system permease family. As to quaternary structure, the complex is probably composed of two ATP-binding proteins (MsmX), two transmembrane proteins (YtcP and YteP) and a solute-binding protein (YtcQ).

Its subcellular location is the cell membrane. In terms of biological role, involved in pectin degradation. Part of the ABC transporter complex YtcQP-YteP involved in the uptake of polygalacturonan and rhamnogalacturonan type I. Responsible for the translocation of the substrate across the membrane. The sequence is that of Polygalacturonan/rhamnogalacturonan transport system permease protein YteP (yteP) from Bacillus subtilis (strain 168).